We begin with the raw amino-acid sequence, 336 residues long: GTPase Obg (336 aa).

The 159-residue stretch at 1–159 (MKFLDETKVY…KTIWLRLKLI (159 aa)) folds into the Obg domain. The region spanning 160 to 327 (ADAGLVGLPN…ALRALRSVIA (168 aa)) is the OBG-type G domain. GTP-binding positions include 166-173 (GLPNAGKS), 191-195 (FTTLH), 212-215 (DIPG), 279-282 (SQID), and 308-310 (SAV). Mg(2+) is bound by residues S173 and T193.

It belongs to the TRAFAC class OBG-HflX-like GTPase superfamily. OBG GTPase family. Monomer. The cofactor is Mg(2+).

The protein localises to the cytoplasm. In terms of biological role, an essential GTPase which binds GTP, GDP and possibly (p)ppGpp with moderate affinity, with high nucleotide exchange rates and a fairly low GTP hydrolysis rate. Plays a role in control of the cell cycle, stress response, ribosome biogenesis and in those bacteria that undergo differentiation, in morphogenesis control. This Rhizobium meliloti (strain 1021) (Ensifer meliloti) protein is GTPase Obg.